A 282-amino-acid chain; its full sequence is Large ribosomal subunit protein uL2c (282 aa).

The segment at 230–261 is disordered; that stretch reads SAQNAVDHPHGGGEGKAPIGRIPSTPWGKPAL.

Belongs to the universal ribosomal protein uL2 family. Part of the 50S ribosomal subunit.

The protein localises to the plastid. This chain is Large ribosomal subunit protein uL2c (rpl2), found in Helicosporidium sp. subsp. Simulium jonesii (Green alga).